Consider the following 446-residue polypeptide: Transcriptional adapter 2-alpha (446 aa).

The ZZ-type zinc-finger motif lies at 12–69 (FDKPPCRGCSSYLTEPYVKCAECGPPPFLLCLQCFTRGFEYKKHQSDHTYEIMTSDFP). Zn(2+) is bound by residues Cys17, Cys20, Cys31, Cys34, Cys42, Cys45, His55, and His59. Residues 70–122 (VLDPNWTAQEEMALLEAVMDCGFGNWQDVANQMCTKSKEECEKHYMKHFINNP) enclose the SANT domain. The interval 345–375 (DIDSGPTPAAPIPSNSGRRSAPPLNLTGLPG) is disordered. Residues 359–446 (NSGRRSAPPL…LIREGYITKA (88 aa)) form the SWIRM domain. The DNA-binding element occupies 429 to 438 (KTRKIYDFLI).

The protein resides in the nucleus. It localises to the chromosome. Functionally, component of some complex with histone acetyltransferase activity. Required for the function of some acidic activation domains, which activate transcription from a distant site. Binds double-stranded DNA. Binds dinucleosomes, probably at the linker region between neighboring nucleosomes. Plays a role in chromatin remodeling. The polypeptide is Transcriptional adapter 2-alpha (TADA2A) (Gallus gallus (Chicken)).